Reading from the N-terminus, the 263-residue chain is uncharacterized protein (263 aa).

Positions 1 to 22 (MRYLKRVVLYRIVMVLSVFIIG) are cleaved as a signal peptide. The N-palmitoyl cysteine moiety is linked to residue C23. Residue C23 is the site of S-diacylglycerol cysteine attachment.

The protein belongs to the staphylococcal tandem lipoprotein family.

The protein resides in the cell membrane. This is an uncharacterized protein from Staphylococcus aureus (strain bovine RF122 / ET3-1).